Here is a 183-residue protein sequence, read N- to C-terminus: NADH-quinone oxidoreductase subunit A (183 aa).

Helical transmembrane passes span Ile11–Leu31, Phe63–Trp83, and Val98–Leu118. The disordered stretch occupies residues Thr159–Glu183.

Belongs to the complex I subunit 3 family. As to quaternary structure, NDH-1 is composed of 14 different subunits. Subunits NuoA, H, J, K, L, M, N constitute the membrane sector of the complex.

Its subcellular location is the cell inner membrane. The enzyme catalyses a quinone + NADH + 5 H(+)(in) = a quinol + NAD(+) + 4 H(+)(out). Functionally, NDH-1 shuttles electrons from NADH, via FMN and iron-sulfur (Fe-S) centers, to quinones in the respiratory chain. The immediate electron acceptor for the enzyme in this species is believed to be ubiquinone. Couples the redox reaction to proton translocation (for every two electrons transferred, four hydrogen ions are translocated across the cytoplasmic membrane), and thus conserves the redox energy in a proton gradient. This chain is NADH-quinone oxidoreductase subunit A, found in Acinetobacter baumannii (strain ACICU).